Here is a 77-residue protein sequence, read N- to C-terminus: NADH-ubiquinone oxidoreductase chain 4L (77 aa).

Helical transmembrane passes span leucine 18–glycine 38 and methionine 44–valine 64.

This sequence belongs to the complex I subunit 4L family.

It is found in the mitochondrion membrane. The catalysed reaction is a ubiquinone + NADH + 5 H(+)(in) = a ubiquinol + NAD(+) + 4 H(+)(out). In terms of biological role, core subunit of the mitochondrial membrane respiratory chain NADH dehydrogenase (Complex I) that is believed to belong to the minimal assembly required for catalysis. Complex I functions in the transfer of electrons from NADH to the respiratory chain. The immediate electron acceptor for the enzyme is believed to be ubiquinone. The chain is NADH-ubiquinone oxidoreductase chain 4L (ND4L) from Ascaris suum (Pig roundworm).